The following is an 831-amino-acid chain: Leucine--tRNA ligase (831 aa).

A 'HIGH' region motif is present at residues 36-46 (PYPSGKLHIGH). Residues 607 to 611 (KMSKS) carry the 'KMSKS' region motif. Residue lysine 610 participates in ATP binding.

The protein belongs to the class-I aminoacyl-tRNA synthetase family.

The protein localises to the cytoplasm. The enzyme catalyses tRNA(Leu) + L-leucine + ATP = L-leucyl-tRNA(Leu) + AMP + diphosphate. The polypeptide is Leucine--tRNA ligase (Neorickettsia sennetsu (strain ATCC VR-367 / Miyayama) (Ehrlichia sennetsu)).